The sequence spans 465 residues: A-type ATP synthase subunit B (465 aa).

The protein belongs to the ATPase alpha/beta chains family. Has multiple subunits with at least A(3), B(3), C, D, E, F, H, I and proteolipid K(x).

The protein localises to the cell membrane. In terms of biological role, component of the A-type ATP synthase that produces ATP from ADP in the presence of a proton gradient across the membrane. The B chain is a regulatory subunit. This chain is A-type ATP synthase subunit B, found in Thermococcus kodakarensis (strain ATCC BAA-918 / JCM 12380 / KOD1) (Pyrococcus kodakaraensis (strain KOD1)).